The following is a 334-amino-acid chain: Adenosine deaminase (334 aa).

2 residues coordinate Zn(2+): H12 and H14. The substrate site is built by H14, D16, and G170. H197 is a binding site for Zn(2+). E200 serves as the catalytic Proton donor. D278 lines the Zn(2+) pocket. D279 is a substrate binding site.

This sequence belongs to the metallo-dependent hydrolases superfamily. Adenosine and AMP deaminases family. Adenosine deaminase subfamily. It depends on Zn(2+) as a cofactor.

It catalyses the reaction adenosine + H2O + H(+) = inosine + NH4(+). The catalysed reaction is 2'-deoxyadenosine + H2O + H(+) = 2'-deoxyinosine + NH4(+). Catalyzes the hydrolytic deamination of adenosine and 2-deoxyadenosine. In Vibrio cholerae serotype O1 (strain ATCC 39541 / Classical Ogawa 395 / O395), this protein is Adenosine deaminase.